The primary structure comprises 147 residues: uncharacterized protein (147 aa).

Positions 30-102 are disordered; it reads GRCEQVALSS…TPPTRPESIF (73 aa). The segment covering 62 to 71 has biased composition (polar residues); the sequence is RPSTGETFVQ.

This is an uncharacterized protein from Homo sapiens (Human).